The chain runs to 360 residues: MTYKVLHIGAGGFGERWCDTFLPQNVADGTIEVVGLVDIDAKALDIGRKHLGLKAEQCFTAAAQAFQMVDADFCTIVIPPALHEGIVDLALARGMHILSEKPIADTMEASVRIAEKVRKSGLNMGVTMSHRFDQDKSTLRALVGADAIGRVNTVSCRFAGDFRLYDSWGRFRHEMMHPMLIEGAVHHLDIMADLAGAPCTSIYARTWKPEWADYKGDTDAIVLMDFANGAHGVYEGSSAQATGLNDWAFEYVRVEGESGTAILDHREIEVFHRYPMRLRQASRQGKGQQVSLLPGRKWQNALLIEQFCQWLDSGPPMATNVWENLQSVALVFSAIESVRLGQPVKVQEFLQSYRVGASIE.

An NAD(+)-binding site is contributed by 4–22 (KVLHIGAGGFGERWCDTFL).

Could be a NAD-dependent oxidoreductase. This is an uncharacterized protein from Sinorhizobium fredii (strain NBRC 101917 / NGR234).